A 404-amino-acid chain; its full sequence is Cysteine desulfurase IscS (404 aa).

Pyridoxal 5'-phosphate is bound by residues 75-76, N155, Q183, and 203-205; these read AT and SGH. N6-(pyridoxal phosphate)lysine is present on K206. T243 provides a ligand contact to pyridoxal 5'-phosphate. C328 functions as the Cysteine persulfide intermediate in the catalytic mechanism. C328 contributes to the [2Fe-2S] cluster binding site.

It belongs to the class-V pyridoxal-phosphate-dependent aminotransferase family. NifS/IscS subfamily. In terms of assembly, homodimer. Forms a heterotetramer with IscU, interacts with other sulfur acceptors. The cofactor is pyridoxal 5'-phosphate.

It localises to the cytoplasm. It catalyses the reaction (sulfur carrier)-H + L-cysteine = (sulfur carrier)-SH + L-alanine. The protein operates within cofactor biosynthesis; iron-sulfur cluster biosynthesis. In terms of biological role, master enzyme that delivers sulfur to a number of partners involved in Fe-S cluster assembly, tRNA modification or cofactor biosynthesis. Catalyzes the removal of elemental sulfur atoms from cysteine to produce alanine. Functions as a sulfur delivery protein for Fe-S cluster synthesis onto IscU, an Fe-S scaffold assembly protein, as well as other S acceptor proteins. In Shewanella sp. (strain ANA-3), this protein is Cysteine desulfurase IscS.